The following is a 440-amino-acid chain: Cobyrinate a,c-diamide synthase (440 aa).

The GATase cobBQ-type domain occupies 247–428 (RIAIAYDAAF…MHLYFPSNPR (182 aa)). Cys-329 (nucleophile) is an active-site residue.

The protein belongs to the CobB/CbiA family. The cofactor is Mg(2+).

The enzyme catalyses cob(II)yrinate + 2 L-glutamine + 2 ATP + 2 H2O = cob(II)yrinate a,c diamide + 2 L-glutamate + 2 ADP + 2 phosphate + 2 H(+). It participates in cofactor biosynthesis; adenosylcobalamin biosynthesis; cob(II)yrinate a,c-diamide from sirohydrochlorin (anaerobic route): step 10/10. Its function is as follows. Catalyzes the ATP-dependent amidation of the two carboxylate groups at positions a and c of cobyrinate, using either L-glutamine or ammonia as the nitrogen source. The protein is Cobyrinate a,c-diamide synthase of Picrophilus torridus (strain ATCC 700027 / DSM 9790 / JCM 10055 / NBRC 100828 / KAW 2/3).